The following is a 249-amino-acid chain: 2,3-bisphosphoglycerate-dependent phosphoglycerate mutase (249 aa).

Residues 9 to 16, 22 to 23, arginine 61, 88 to 91, lysine 99, 115 to 116, and 184 to 185 each bind substrate; these read RHGQSQWN, TG, ERHY, RR, and GN. The active-site Tele-phosphohistidine intermediate is histidine 10. Glutamate 88 serves as the catalytic Proton donor/acceptor.

This sequence belongs to the phosphoglycerate mutase family. BPG-dependent PGAM subfamily. Homodimer.

It catalyses the reaction (2R)-2-phosphoglycerate = (2R)-3-phosphoglycerate. It participates in carbohydrate degradation; glycolysis; pyruvate from D-glyceraldehyde 3-phosphate: step 3/5. Catalyzes the interconversion of 2-phosphoglycerate and 3-phosphoglycerate. In Xanthomonas campestris pv. campestris (strain B100), this protein is 2,3-bisphosphoglycerate-dependent phosphoglycerate mutase.